The primary structure comprises 806 residues: Phenylalanine--tRNA ligase beta subunit (806 aa).

In terms of domain architecture, tRNA-binding spans 39 to 154 (SAGLKKIVVG…EAIAPGTDVY (116 aa)). A B5 domain is found at 410–485 (PQPKVIQFDS…RLYGYDNLPS (76 aa)). Mg(2+) is bound by residues aspartate 463, aspartate 469, glutamate 472, and glutamate 473. One can recognise an FDX-ACB domain in the interval 713 to 806 (PKFPEVTRDI…LVATFQAKVR (94 aa)).

The protein belongs to the phenylalanyl-tRNA synthetase beta subunit family. Type 1 subfamily. As to quaternary structure, tetramer of two alpha and two beta subunits. The cofactor is Mg(2+).

It is found in the cytoplasm. The catalysed reaction is tRNA(Phe) + L-phenylalanine + ATP = L-phenylalanyl-tRNA(Phe) + AMP + diphosphate + H(+). This chain is Phenylalanine--tRNA ligase beta subunit, found in Latilactobacillus sakei subsp. sakei (strain 23K) (Lactobacillus sakei subsp. sakei).